The sequence spans 429 residues: Adenylosuccinate synthetase (429 aa).

GTP-binding positions include 12-18 (GDEGKGK) and 40-42 (GHT). Catalysis depends on Asp-13, which acts as the Proton acceptor. Positions 13 and 40 each coordinate Mg(2+). IMP contacts are provided by residues 13–16 (DEGK), 38–41 (NAGH), Thr-128, Arg-142, Gln-223, Thr-238, and Arg-302. His-41 functions as the Proton donor in the catalytic mechanism. A substrate-binding site is contributed by 298–304 (TVTGRPR). Residues Arg-304, 330-332 (LLD), and 412-414 (SVG) each bind GTP.

This sequence belongs to the adenylosuccinate synthetase family. As to quaternary structure, homodimer. The cofactor is Mg(2+).

It is found in the cytoplasm. The enzyme catalyses IMP + L-aspartate + GTP = N(6)-(1,2-dicarboxyethyl)-AMP + GDP + phosphate + 2 H(+). It participates in purine metabolism; AMP biosynthesis via de novo pathway; AMP from IMP: step 1/2. Plays an important role in the de novo pathway of purine nucleotide biosynthesis. Catalyzes the first committed step in the biosynthesis of AMP from IMP. This Lactobacillus gasseri (strain ATCC 33323 / DSM 20243 / BCRC 14619 / CIP 102991 / JCM 1131 / KCTC 3163 / NCIMB 11718 / NCTC 13722 / AM63) protein is Adenylosuccinate synthetase.